Reading from the N-terminus, the 316-residue chain is Acetaldehyde dehydrogenase (316 aa).

Serine 13–isoleucine 16 contacts NAD(+). The active-site Acyl-thioester intermediate is the cysteine 131. Residues serine 162–asparagine 170 and asparagine 290 contribute to the NAD(+) site.

It belongs to the acetaldehyde dehydrogenase family.

It catalyses the reaction acetaldehyde + NAD(+) + CoA = acetyl-CoA + NADH + H(+). Catalyzes the conversion of acetaldehyde to acetyl-CoA, using NAD(+) and coenzyme A. Is the final enzyme in the meta-cleavage pathway for the degradation of 2-aminophenol. This Pseudomonas sp protein is Acetaldehyde dehydrogenase (amnH).